Reading from the N-terminus, the 170-residue chain is Negative modulator of initiation of replication (170 aa).

The interval 139–145 (NTNTGRK) is interaction with DNA.

The protein belongs to the SeqA family. Homodimer. Polymerizes to form helical filaments.

The protein resides in the cytoplasm. In terms of biological role, negative regulator of replication initiation, which contributes to regulation of DNA replication and ensures that replication initiation occurs exactly once per chromosome per cell cycle. Binds to pairs of hemimethylated GATC sequences in the oriC region, thus preventing assembly of replication proteins and re-initiation at newly replicated origins. Repression is relieved when the region becomes fully methylated. The protein is Negative modulator of initiation of replication of Tolumonas auensis (strain DSM 9187 / NBRC 110442 / TA 4).